The primary structure comprises 375 residues: Alcohol dehydrogenase class-3 chain L (375 aa).

Ala1 is subject to N-acetylalanine. Cys46, His68, Cys98, Cys101, Cys104, Cys112, and Cys175 together coordinate Zn(2+).

Belongs to the zinc-containing alcohol dehydrogenase family. Class-III subfamily. As to quaternary structure, homodimer or heterodimer with H chain. It depends on Zn(2+) as a cofactor.

It is found in the cytoplasm. The enzyme catalyses a primary alcohol + NAD(+) = an aldehyde + NADH + H(+). It carries out the reaction a secondary alcohol + NAD(+) = a ketone + NADH + H(+). The catalysed reaction is S-(hydroxymethyl)glutathione + NADP(+) = S-formylglutathione + NADPH + H(+). It catalyses the reaction S-(hydroxymethyl)glutathione + NAD(+) = S-formylglutathione + NADH + H(+). Class-III ADH is remarkably ineffective in oxidizing ethanol, but it readily catalyzes the oxidation of long-chain primary alcohols and the oxidation of S-(hydroxymethyl) glutathione. The chain is Alcohol dehydrogenase class-3 chain L from Gadus morhua (Atlantic cod).